The sequence spans 497 residues: Probable malate:quinone oxidoreductase (497 aa).

The protein belongs to the MQO family. Requires FAD as cofactor.

The enzyme catalyses (S)-malate + a quinone = a quinol + oxaloacetate. The protein operates within carbohydrate metabolism; tricarboxylic acid cycle; oxaloacetate from (S)-malate (quinone route): step 1/1. The chain is Probable malate:quinone oxidoreductase from Hahella chejuensis (strain KCTC 2396).